The sequence spans 609 residues: UvrABC system protein C (609 aa).

Positions 22–100 constitute a GIY-YIG domain; the sequence is EKPGVYQYLN…IKKYKPRYNV (79 aa). In terms of domain architecture, UVR spans 214–249; sequence QDISRMLVEKMQELANEMKFEEAQKIKEKYLLIENY.

The protein belongs to the UvrC family. In terms of assembly, interacts with UvrB in an incision complex.

The protein resides in the cytoplasm. Functionally, the UvrABC repair system catalyzes the recognition and processing of DNA lesions. UvrC both incises the 5' and 3' sides of the lesion. The N-terminal half is responsible for the 3' incision and the C-terminal half is responsible for the 5' incision. In Bacteroides thetaiotaomicron (strain ATCC 29148 / DSM 2079 / JCM 5827 / CCUG 10774 / NCTC 10582 / VPI-5482 / E50), this protein is UvrABC system protein C.